Reading from the N-terminus, the 178-residue chain is Probable chorismate pyruvate-lyase (178 aa).

The substrate site is built by Arg73, Leu111, and Glu163.

The protein belongs to the UbiC family.

It localises to the cytoplasm. It carries out the reaction chorismate = 4-hydroxybenzoate + pyruvate. It functions in the pathway cofactor biosynthesis; ubiquinone biosynthesis. Functionally, removes the pyruvyl group from chorismate, with concomitant aromatization of the ring, to provide 4-hydroxybenzoate (4HB) for the ubiquinone pathway. The polypeptide is Probable chorismate pyruvate-lyase (Pseudomonas aeruginosa (strain UCBPP-PA14)).